Consider the following 148-residue polypeptide: 3-dehydroquinate dehydratase (148 aa).

Tyrosine 24 (proton acceptor) is an active-site residue. Residues asparagine 75, histidine 81, and aspartate 88 each contribute to the substrate site. The Proton donor role is filled by histidine 101. Substrate-binding positions include 102–103 (LS) and arginine 112.

Belongs to the type-II 3-dehydroquinase family. As to quaternary structure, homododecamer.

The catalysed reaction is 3-dehydroquinate = 3-dehydroshikimate + H2O. The protein operates within metabolic intermediate biosynthesis; chorismate biosynthesis; chorismate from D-erythrose 4-phosphate and phosphoenolpyruvate: step 3/7. In terms of biological role, catalyzes a trans-dehydration via an enolate intermediate. This chain is 3-dehydroquinate dehydratase, found in Rhizobium meliloti (strain 1021) (Ensifer meliloti).